We begin with the raw amino-acid sequence, 418 residues long: Endoglucanase EG-II (418 aa).

An N-terminal signal peptide occupies residues 1 to 21 (MNKSVAPLLLAASILYGGAAA). Pyrrolidone carboxylic acid is present on Gln22. The CBM1 domain maps to 22-57 (QQTVWGQCGGIGWSGPTNCAPGSACSTLNPYYAQCI). A linker region spans residues 58–91 (PGATTITTSTRPPSGPTTTTRATSTSSSTPPTSS). The disordered stretch occupies residues 63-91 (ITTSTRPPSGPTTTTRATSTSSSTPPTSS). Positions 92–418 (GVRFAGVNIA…SLVSSCLARK (327 aa)) are catalytic. Cys107 and Cys113 are disulfide-bonded. N-linked (GlcNAc) asparagine glycosylation is present at Asn124. A disulfide bridge links Cys183 with Cys190. Glu239 (proton donor/acceptor) is an active-site residue. Disulfide bonds link Cys323/Cys359 and Cys364/Cys414. Glu350 serves as the catalytic Nucleophile.

The protein belongs to the glycosyl hydrolase 5 (cellulase A) family.

Its subcellular location is the secreted. The catalysed reaction is Endohydrolysis of (1-&gt;4)-beta-D-glucosidic linkages in cellulose, lichenin and cereal beta-D-glucans.. Endoglucanase (EG) that cleaves the internal beta-1,4-glucosidic bonds in cellulose. The degradation of cellulose involves an interplay between different cellulolytic enzymes. Hydrolysis starts with EGs, which cut internal glycosidic linkages to reduce the polymerization degree of the substrate and creates new chain ends for exocellobiohydrolases (CBHs). The CBH release the disaccharide cellobiose from the non-reducing end of the cellulose polymer chain. Finally, beta-1,4-glucosidases hydrolyze the cellobiose and other short cello-oligosaccharides into glucose units. The sequence is that of Endoglucanase EG-II (egl2) from Hypocrea jecorina (strain ATCC 56765 / BCRC 32924 / NRRL 11460 / Rut C-30) (Trichoderma reesei).